A 666-amino-acid polypeptide reads, in one-letter code: MSDSHLTAFDKASKAGFIIALGIVYGDIGTSPLYTMQSLVENQGGVNQVSESFILGSISLIIWTLTLITTIKYVLIALKADNHHEGGIFSLFTLVRKMSPWLIVPAMIGGATLLSDGALTPAVTVTSAIEGLKAVPGLSHIYQNQTNVIITTLVILIVLFGIQRFGTGFIGKIFGPVMFIWFSFLGVSGFFNMLGHLEIFKAINPYYALHLLFSPENHRGIFILGSIFLATTGAEALYSDLGHVGRGNIYVSWPFVKMCIVLSYCGQAAWILANKHSGIELNPFFASVPSQLRVYLVSLATLAAIIASQALISGSFTLVSEAMRLKIFPLFRVTYPGANLGQLYIPVINWILFAVTSCTVLAFRTSAHMEAAYGLAITITMLMTTILLKYYLIKKGTRPILAHLVMAFFALVEFIFFLASAIKFMHGGYAVVILALAIVFVMFIWHAGTRIVFKYVKSLNLNDYKEQIKQLRDDVCFDLYQTNVVYLSNRMQDHMIDRSILYSILDKRPKRAQVYWFVNVQVTDEPYTAKYKVDMMGTDYMVRVNLYLGFRMPQTVPRYLRTIVQDLMESGRLPKQEQEYTITPGRDVGDFRFVLIEERVSNARQLSNFERFIMQTKASIKHVTASPMRWFGLQYSEVTLEVVPLILSDILKLPIKELVPVEDSEA.

The next 12 helical transmembrane spans lie at 16–36 (GFII…LYTM), 58–78 (ISLI…LIAL), 100–120 (PWLI…GALT), 149–169 (IITT…GTGF), 173–193 (IFGP…FFNM), 221–241 (IFIL…YSDL), 253–273 (WPFV…WILA), 294–314 (VYLV…LISG), 343–363 (LYIP…VLAF), 373–393 (YGLA…YYLI), 399–419 (PILA…FFLA), and 424–444 (FMHG…VMFI).

The protein belongs to the HAK/KUP transporter (TC 2.A.72) family.

The protein resides in the cell membrane. It carries out the reaction K(+)(in) + H(+)(in) = K(+)(out) + H(+)(out). Functionally, transport of potassium into the cell. Likely operates as a K(+):H(+) symporter. This is Probable potassium transport system protein Kup from Streptococcus pyogenes serotype M3 (strain ATCC BAA-595 / MGAS315).